The sequence spans 379 residues: Probable 3-phenylpropionic acid transporter (379 aa).

Topologically, residues 1 to 4 are cytoplasmic; that stretch reads MVLQ. The chain crosses the membrane as a helical span at residues 5–31; that stretch reads STRWLALGYFTYFFSYGIFLPFWSVWL. At 32-37 the chain is on the periplasmic side; it reads KGIGLT. The helical transmembrane segment at 38-66 threads the bilayer; it reads PETIGLLLGAGLVARFLGSLLIAPRVSDP. The Cytoplasmic portion of the chain corresponds to 67-70; the sequence is SRLI. Residues 71-96 form a helical membrane-spanning segment; the sequence is SALRVLALLTLLFAVAFWAGAHVAWL. The Periplasmic segment spans residues 97 to 100; the sequence is MLVM. The chain crosses the membrane as a helical span at residues 101–118; that stretch reads IGFNLFFSPLVPLTDALA. The Cytoplasmic segment spans residues 119–129; the sequence is NTWQKQFPLDY. Residues 130 to 152 traverse the membrane as a helical segment; that stretch reads GKVRLWGSVAFVIGSALTGKLVT. The Periplasmic segment spans residues 153–155; the sequence is MFD. The chain crosses the membrane as a helical span at residues 156 to 175; the sequence is YRVILALLTLGVASMLLGFL. Topologically, residues 176–207 are cytoplasmic; it reads IRPTIQPQGASRQQESTGWSAWLALVRQNWRF. Residues 208–227 traverse the membrane as a helical segment; that stretch reads LACVCLLQGAHAAYYGFSAI. At 228-231 the chain is on the periplasmic side; that stretch reads YWQA. A helical membrane pass occupies residues 232 to 256; that stretch reads AGYSASAVGYLWSLGVVAEVIIFAL. Topologically, residues 257 to 266 are cytoplasmic; it reads SNKLFRRCSA. The helical transmembrane segment at 267–286 threads the bilayer; sequence RDMLLISAICGVVRWGIMGA. At 287-289 the chain is on the periplasmic side; it reads TTA. A helical transmembrane segment spans residues 290 to 312; the sequence is LPWLIVVQILHCGTFTVCHLAAM. Residues 313–323 lie on the Cytoplasmic side of the membrane; the sequence is RYIAARQGSEV. A helical transmembrane segment spans residues 324–351; sequence IRLQAVYSAVAMGGSIAIMTVFAGFLYQ. Over 352–354 the chain is Periplasmic; that stretch reads YLG. Residues 355–375 form a helical membrane-spanning segment; the sequence is HGVFWVMALVALPAMFLRPKV. At 376–379 the chain is on the cytoplasmic side; it reads VPSC.

It belongs to the major facilitator superfamily. Phenyl propionate permease (PPP) (TC 2.A.1.27) family.

It is found in the cell inner membrane. In terms of biological role, probable permease involved in the uptake of 3-phenylpropionic acid. This Escherichia coli (strain K12) protein is Probable 3-phenylpropionic acid transporter (hcaT).